A 208-amino-acid chain; its full sequence is FMN-dependent NADH:quinone oxidoreductase 1 (208 aa).

FMN is bound at residue S17 to S19.

Belongs to the azoreductase type 1 family. Homodimer. Requires FMN as cofactor.

The catalysed reaction is 2 a quinone + NADH + H(+) = 2 a 1,4-benzosemiquinone + NAD(+). It carries out the reaction N,N-dimethyl-1,4-phenylenediamine + anthranilate + 2 NAD(+) = 2-(4-dimethylaminophenyl)diazenylbenzoate + 2 NADH + 2 H(+). Quinone reductase that provides resistance to thiol-specific stress caused by electrophilic quinones. In terms of biological role, also exhibits azoreductase activity. Catalyzes the reductive cleavage of the azo bond in aromatic azo compounds to the corresponding amines. In Listeria innocua serovar 6a (strain ATCC BAA-680 / CLIP 11262), this protein is FMN-dependent NADH:quinone oxidoreductase 1.